Here is a 304-residue protein sequence, read N- to C-terminus: N-acetylmuramic acid 6-phosphate etherase (304 aa).

In terms of domain architecture, SIS spans 57–220; sequence AVKGLSAGGR…STATMVGLGK (164 aa). Glutamate 85 serves as the catalytic Proton donor. The active site involves glutamate 116.

This sequence belongs to the GCKR-like family. MurNAc-6-P etherase subfamily. As to quaternary structure, homodimer.

It catalyses the reaction N-acetyl-D-muramate 6-phosphate + H2O = N-acetyl-D-glucosamine 6-phosphate + (R)-lactate. The protein operates within amino-sugar metabolism; N-acetylmuramate degradation. Functionally, specifically catalyzes the cleavage of the D-lactyl ether substituent of MurNAc 6-phosphate, producing GlcNAc 6-phosphate and D-lactate. The protein is N-acetylmuramic acid 6-phosphate etherase of Cutibacterium acnes (strain DSM 16379 / KPA171202) (Propionibacterium acnes).